The sequence spans 453 residues: HTH-type pyridoxine biosynthesis transcriptional regulator PdxR (453 aa).

One can recognise an HTH gntR-type domain in the interval 15–83 (TSIPTQLTEQ…RGSGTTINPD (69 aa)). Residues 43–62 (SRSLSTQLGVSRGSVVTAYD) constitute a DNA-binding region (H-T-H motif).

This sequence in the C-terminal section; belongs to the class-I pyridoxal-phosphate-dependent aminotransferase family. Requires pyridoxal 5'-phosphate as cofactor.

May have a regulatory function in pyridoxine biosynthesis. Is said to also have an aminotransferase activity in valine biosynthesis as a double inactivation of ilvE and pdxR results in an auxotrophic requirement for valine. This is HTH-type pyridoxine biosynthesis transcriptional regulator PdxR (pdxR) from Corynebacterium glutamicum (strain ATCC 13032 / DSM 20300 / JCM 1318 / BCRC 11384 / CCUG 27702 / LMG 3730 / NBRC 12168 / NCIMB 10025 / NRRL B-2784 / 534).